Consider the following 429-residue polypeptide: Glutamate-1-semialdehyde 2,1-aminomutase 2 (429 aa).

An N6-(pyridoxal phosphate)lysine modification is found at K268.

This sequence belongs to the class-III pyridoxal-phosphate-dependent aminotransferase family. HemL subfamily. In terms of assembly, homodimer. The cofactor is pyridoxal 5'-phosphate.

Its subcellular location is the cytoplasm. It carries out the reaction (S)-4-amino-5-oxopentanoate = 5-aminolevulinate. It participates in porphyrin-containing compound metabolism; protoporphyrin-IX biosynthesis; 5-aminolevulinate from L-glutamyl-tRNA(Glu): step 2/2. The sequence is that of Glutamate-1-semialdehyde 2,1-aminomutase 2 from Staphylococcus aureus (strain Mu50 / ATCC 700699).